The following is a 309-amino-acid chain: Wall-associated proteinase (309 aa).

Residues asparagine 190 and asparagine 295 are each glycosylated (N-linked (GlcNAc...) asparagine).

Its subcellular location is the secreted. The protein localises to the cell wall. It is found in the membrane. May participate in wall plasticization and/or intussusception or in cell wall turnover. This is Wall-associated proteinase from Coccidioides posadasii (strain RMSCC 757 / Silveira) (Valley fever fungus).